The chain runs to 382 residues: Lipid-A-disaccharide synthase (382 aa).

Belongs to the LpxB family.

It catalyses the reaction a lipid X + a UDP-2-N,3-O-bis[(3R)-3-hydroxyacyl]-alpha-D-glucosamine = a lipid A disaccharide + UDP + H(+). It participates in bacterial outer membrane biogenesis; LPS lipid A biosynthesis. Condensation of UDP-2,3-diacylglucosamine and 2,3-diacylglucosamine-1-phosphate to form lipid A disaccharide, a precursor of lipid A, a phosphorylated glycolipid that anchors the lipopolysaccharide to the outer membrane of the cell. This is Lipid-A-disaccharide synthase from Koribacter versatilis (strain Ellin345).